The primary structure comprises 836 residues: Transcriptional regulatory protein UME6 (836 aa).

The span at 1–14 shows a compositional bias: basic and acidic residues; the sequence is MLDKARSQSKHMDE. Disordered stretches follow at residues 1-77, 92-168, 218-332, and 381-464; these read MLDK…IESL, STCA…CNGH, HLPP…DDQC, and NESS…GFFY. 3 stretches are compositionally biased toward polar residues: residues 39–48, 61–77, and 92–112; these read SRATLMNSSQ, GANS…IESL, and STCA…SLKV. At Ser114 the chain carries Phosphoserine. Positions 117 to 126 are enriched in basic and acidic residues; it reads DIKDDPKEND. 3 positions are modified to phosphoserine: Ser141, Ser150, and Ser228. A compositionally biased stretch (low complexity) spans 226–236; that stretch reads AVSSPGTTAAG. Positions 258 to 272 are enriched in polar residues; the sequence is TSANKNNGKTTNSPM. Over residues 273 to 305 the composition is skewed to low complexity; that stretch reads SILSRNNSTNNNDNNSIQSSDSRESSNNNEIGG. A phosphoserine mark is found at Ser316 and Ser318. Polar residues predominate over residues 316–325; it reads SPSNDSQVQH. Residues 381-398 are compositionally biased toward low complexity; the sequence is NESSSNNASSNTDTPTNS. A compositionally biased stretch (polar residues) spans 399 to 414; the sequence is RHANTSSSITSRNNFQ. Low complexity predominate over residues 426-446; sequence PTSASSFTSTNNNNPQRNNIN. The SIN3-binding stretch occupies residues 508-594; that stretch reads NSASSSTKLD…QPIFESNNST (87 aa). The segment at 636-766 is disordered; sequence NGKRIDRRLS…ATSSTSQGTR (131 aa). Ser645 carries the phosphoserine modification. A compositionally biased stretch (polar residues) spans 670–679; sequence VASQTNSDYN. A compositionally biased stretch (low complexity) spans 680–702; the sequence is SLGESSTSSAPSSPSLKASSGLA. The span at 718–739 shows a compositional bias: basic residues; the sequence is SKGKNVKPKAKSKAKQSSKKRP. Positions 740 to 751 are enriched in low complexity; that stretch reads NNTTSKSKANNS. Residues 771-798 constitute a DNA-binding region (zn(2)-C6 fungal-type); sequence CWICRLRKKKCTEERPHCFNCERLKLDC.

Component of the RPD3C(L) complex composed of at least ASH1, CTI6, DEP1, PHO23, RPD3, RXT2, RXT3, SAP30, SDS3, SIN3, UME1 and UME6. Interacts with RIM11, MCK1 and IME1. Phosphorylated by RIM11 and MCK1.

The protein resides in the nucleus. Functionally, component of the RPD3C(L) histone deacetylase complex (HDAC) responsible for the deacetylation of lysine residues on the N-terminal part of the core histones (H2A, H2B, H3 and H4). Histone deacetylation gives a tag for epigenetic repression and plays an important role in transcriptional regulation, cell cycle progression and developmental events. Binds to the URS1 site (5'-AGCCGCCGA-3') and recruits the RPD3 histone deacetylase complex to the promoters to negatively regulate the expression of many genes including CAR1 (arginase), several required for sporulation, mating type switching, inositol metabolism, and oxidative carbon metabolism. Also recruits the ISW2 chromatin remodeling complex to promoters in a second gene repression pathway. Associates with the master regulator of meiosis IME1 in order to activate the expression of meiosis genes. Has both a positive and negative role in regulating phospholipid biosynthesis. The protein is Transcriptional regulatory protein UME6 (UME6) of Saccharomyces cerevisiae (strain ATCC 204508 / S288c) (Baker's yeast).